Reading from the N-terminus, the 565-residue chain is MLNSSTNNTSSPIINSIETTDIEEKYRKYYVPNDLYWGIGIENESYFMLDKTIERTGEYIKKNRRRERYSVDYNTSYDQEKLTNYLNKLFGDRDLFNIPQYVNSHTLSKTDTQGEHRTLYVIGQKNNPKYSGKSLHELFLETNNLYQLDFNHKYVFDGDTIEFITQNFYKTTVNDCVNELIMYKNKFVNDMNILMKKNNLPLLSFPKINFGLVHFRTNPNNIGIFNNGTYHINLTMPTKLNSQGEIADPILFEKRHKNAIELIKWIEPLIIALYGSPDVFSVEDNQKYSKGSLRLTASRYVSIGTYDTNIMKKGKQLNDLKDSMYLYLYDKSWYNKIYQQTDYKQCDHIGYDINYAKHLNLGIEFRILDYFPEEVLGELIKFIVLILDHSFETKIDLQSVECKEWHDFVCDALINGNTVIVPKELGLIMNQFIGFPLIKHNMSIKKYMKKLSKFLHKKYANSLCSRNMSPNMQVPKIYNINKYMWENNFLQYIPINNKNHLKVLKLYHIYSDLKSDKITFDPENNYHSILVNSDLLQESELDLDTFYEKLLKISNSKIPINKYIL.

This is an uncharacterized protein from Acanthamoeba polyphaga mimivirus (APMV).